Here is a 251-residue protein sequence, read N- to C-terminus: Endonuclease NucS (251 aa).

A compositionally biased stretch (basic and acidic residues) spans 230–240; that stretch reads LEPPKKGNEKR. Residues 230-251 are disordered; that stretch reads LEPPKKGNEKRSKQKTLDFFTP.

It belongs to the NucS endonuclease family. Homodimer. Interacts with PCNA.

It is found in the cytoplasm. Activity is modulated by PCNA. PCNA increases the binding affinity of NucS towards ssDNA as well as branched DNA substrates carrying either 3' or 5' flaps. PCNA is also required for optimal loading of NucS on its substrates and to direct activity towards ss/dsDNA junction. Its function is as follows. Cleaves both 3' and 5' ssDNA extremities of branched DNA structures. Binds to ssDNA. This is Endonuclease NucS from Pyrococcus abyssi (strain GE5 / Orsay).